The sequence spans 158 residues: Snaclec agglucetin subunit alpha-2 (158 aa).

An N-terminal signal peptide occupies residues 1–23 (MGRFIFVSFGLLVVFLSLSGTGA). Intrachain disulfides connect Cys-27–Cys-38, Cys-55–Cys-152, and Cys-127–Cys-144. Residues 34 to 153 (YDQYCYQVIK…CIQLNPFVCK (120 aa)) form the C-type lectin domain.

This sequence belongs to the snaclec family. Heterotetramer of the subunits alpha-1, alpha-2, beta-1 and beta-2; disulfide-linked. As to expression, expressed by the venom gland.

It localises to the secreted. Functionally, agglucetin specifically causes platelet aggregation and surface exposure of integrin alpha-IIb/beta-3 with a GPIb-(GP1BA-) dependent manner in washed platelets. It binds to human platelets in a saturable manner, and its binding is specifically blocked by anti-GP Ib mAb. It regulates endothelial cell survival and promotes angiogenesis by activating integrin alpha-v/beta-3 signaling through FAK/phosphatidylinositol 3-kinase (PI3K)/Akt pathway. This is Snaclec agglucetin subunit alpha-2 from Deinagkistrodon acutus (Hundred-pace snake).